The following is a 714-amino-acid chain: G protein-coupled receptor kinase 2 (714 aa).

Residues 1–308 (MELENIVANT…LEAQPITYKT (308 aa)) are N-terminal. RGS domains lie at 53 to 174 (YGYV…SQHS) and 177 to 294 (INHK…HRYL). Residues 141-229 (SNANPTETAE…GGGEGGGGGK (89 aa)) form a disordered region. Low complexity predominate over residues 154–175 (CNNTTANNCNNINNSNNSQHSS). Composition is skewed to basic and acidic residues over residues 176 to 190 (DINHKKLDTRNHNGD) and 199 to 220 (HQDDGDESVKCQEGHDDAEKGG). Positions 309 to 574 (FRMYRVLGKG…GQDVMAHPFF (266 aa)) constitute a Protein kinase domain. ATP contacts are provided by residues 315 to 323 (LGKGGFGEV) and Lys338. The active-site Proton acceptor is the Asp435. In terms of domain architecture, AGC-kinase C-terminal spans 577–642 (TQLNWRRLEA…GSVSISWQNE (66 aa)). At Ser612 the chain carries Phosphoserine. Thr613 carries the phosphothreonine modification. A disordered region spans residues 667 to 714 (INAAPEPDKAGCFPFRRKKKQPARTQPIPIPEHLLTTSHSVSSTTVES). Residues 698–714 (EHLLTTSHSVSSTTVES) are compositionally biased toward low complexity.

This sequence belongs to the protein kinase superfamily. AGC Ser/Thr protein kinase family. GPRK subfamily. In terms of tissue distribution, expressed in all larval tissues and in adult ovaries. Larval CNS staining is localized to axons projecting to the optic lobes and the mushroom bodies, in the longitudinal connectives, and in cell bodies and nerves of the ring gland corpus allatum. Adult CNS staining is detectable only in cell bodies and processes associated with the ellipsoid body of the central complex and portions of the mushroom bodies. In the wing disk, expression is confined to a stripe that parallels the anterior/posterior boundary of the wing blade and the hinge region, and weak expression in the prospective notum.

The protein localises to the membrane. It catalyses the reaction [G-protein-coupled receptor] + ATP = [G-protein-coupled receptor]-phosphate + ADP + H(+). Functionally, specifically phosphorylates the activated forms of G protein-coupled receptors. Required during oogenesis and embryogenesis; component of a signaling pathway that functions during egg chamber maturation. This is G protein-coupled receptor kinase 2 (Gprk2) from Drosophila melanogaster (Fruit fly).